We begin with the raw amino-acid sequence, 185 residues long: UPF0301 protein PSHAa2600 (185 aa).

Belongs to the UPF0301 (AlgH) family.

This is UPF0301 protein PSHAa2600 from Pseudoalteromonas translucida (strain TAC 125).